Consider the following 176-residue polypeptide: Ribosome rescue factor SmrB (176 aa).

One can recognise a Smr domain in the interval 98–173 (LDLHGLTQMQ…GTAAILLLVE (76 aa)).

This sequence belongs to the SmrB family. In terms of assembly, associates with collided ribosomes, but not with correctly translating polysomes.

Acts as a ribosome collision sensor. Detects stalled/collided disomes (pairs of ribosomes where the leading ribosome is stalled and a second ribosome has collided with it) and endonucleolytically cleaves mRNA at the 5' boundary of the stalled ribosome. Stalled/collided disomes form a new interface (primarily via the 30S subunits) that binds SmrB. Cleaved mRNA becomes available for tmRNA ligation, leading to ribosomal subunit dissociation and rescue of stalled ribosomes. This Serratia proteamaculans (strain 568) protein is Ribosome rescue factor SmrB.